The sequence spans 333 residues: DNA repair and recombination protein RadA (333 aa).

An ATP-binding site is contributed by 127–134; that stretch reads GEFGSGKT.

The protein belongs to the eukaryotic RecA-like protein family.

Involved in DNA repair and in homologous recombination. Binds and assemble on single-stranded DNA to form a nucleoprotein filament. Hydrolyzes ATP in a ssDNA-dependent manner and promotes DNA strand exchange between homologous DNA molecules. The sequence is that of DNA repair and recombination protein RadA from Pyrobaculum arsenaticum (strain DSM 13514 / JCM 11321 / PZ6).